The primary structure comprises 130 residues: MSQAQYAGTGRRKNAVARVRLVPGTGKITVNKKDVEEYIPHADLRLVINQPFAVTSTVGSYDVFVNVIGGGYAGQSGAIRHGIARALLQVDPDFRDSLKRAGLLTRDSRKVERKKPGLKKARKASQFSKR.

A disordered region spans residues 106–130; that stretch reads RDSRKVERKKPGLKKARKASQFSKR. The segment covering 111 to 130 has biased composition (basic residues); sequence VERKKPGLKKARKASQFSKR.

It belongs to the universal ribosomal protein uS9 family.

This Streptococcus pneumoniae (strain ATCC 700669 / Spain 23F-1) protein is Small ribosomal subunit protein uS9.